The sequence spans 132 residues: Small ribosomal subunit protein uS8 (132 aa).

Belongs to the universal ribosomal protein uS8 family. In terms of assembly, part of the 30S ribosomal subunit. Contacts proteins S5 and S12.

Its function is as follows. One of the primary rRNA binding proteins, it binds directly to 16S rRNA central domain where it helps coordinate assembly of the platform of the 30S subunit. This Clostridium botulinum (strain 657 / Type Ba4) protein is Small ribosomal subunit protein uS8.